The primary structure comprises 433 residues: Steroid hormone receptor ERR2 (433 aa).

Positions 1 to 38 (MSSEDRHLGSSCGSFIKTEPSSPSSGIDALSHHSPSGS) are disordered. The tract at residues 93–211 (YMLNAIPKRL…SPPAKKPLTK (119 aa)) is interaction with NANOG. Residues 100–186 (KRLCLVCGDI…RVRGGRQKYK (87 aa)) constitute a DNA-binding region (nuclear receptor). NR C4-type zinc fingers lie at residues 103–123 (CLVC…CEAC) and 139–163 (CPAT…FMKC). Residues 203–433 (PPAKKPLTKI…LFLEMLEAKV (231 aa)) form an essential for ESRRB transcriptional activity and interaction with NCOA3 region. The NR LBD domain occupies 208–432 (PLTKIVSNLL…KLFLEMLEAK (225 aa)).

It belongs to the nuclear hormone receptor family. NR3 subfamily. Binds DNA as a monomer. Interacts with NR0B1; represses ESRRB activity at the GATA6 promoter. Interacts with NANOG; reciprocally modulates their transcriptional activities and activates POU5F1 expression. Interacts with NCOA3; mediates the interaction between ESRRB and RNA polymerase II complexes and allows NCOA3 corecruitment to ESRRB, KLF4, NANOG, and SOX2 enhancer regions to trigger ESRRB-dependent gene activation involved in self-renewal and pluripotency. Interacts with KDM1A; co-occupes the core set of ESRRB targets including ELF5 and EOMES. Interacts with the multiprotein complex Integrator, at least composed of INTS1, INTS2, INTS3, INTS4, INTS5, INTS6, INTS7, INTS8, INTS9/RC74, INTS10, INTS11/CPSF3L and INTS12; ESRRB is probably not a core component of the integrator complex and associates to integrator via its interaction with INTS1 and INTS9; attracts the transcriptional machinery. Interacts with JARID2. Interacts with POU5F1; recruits ESRRB near the POU5F1-SOX2 element in the NANOG proximal promoter leading to activation of NANOG expression; the interaction is DNA independent. Post-translationally, acetylated by PCAF/KAT2 (in vitro). As to expression, highly expressed in undifferentiated ESCs. Expressed in immature horizontal cells and in rod photoreceptors at intermediate and late stages of differentiation. Expressed in endolymph-producing epithelial cells.

Its subcellular location is the nucleus. The protein localises to the cytoplasm. The protein resides in the chromosome. Functionally, transcription factor that binds a canonical ESRRB recognition (ERRE) sequence 5'TCAAGGTCA-3' localized on promoter and enhancer of targets genes regulating their expression or their transcriptional activity. Plays a role, in a LIF-independent manner, in maintainance of self-renewal and pluripotency of embryonic and trophoblast stem cells through different signaling pathways including FGF signaling pathway and Wnt signaling pathways. Involved in morula development (2-16 cells embryos) by acting as a regulator at the 8-cell stage. Upon FGF signaling pathway activation, interacts with KDM1A by directly binding to enhancer site of ELF5 and EOMES and activating their transcription leading to self-renewal of trophoblast stem cells. Also regulates expression of multiple rod-specific genes and is required for survival of this cell type. Plays a role as transcription factor activator of GATA6, NR0B1, POU5F1 and PERM1. Plays a role as transcription factor repressor of NFE2L2 transcriptional activity and ESR1 transcriptional activity. During mitosis remains bound to a subset of interphase target genes, including pluripotency regulators, through the canonical ESRRB recognition (ERRE) sequence, leading to their transcriptional activation in early G1 phase. Can coassemble on structured DNA elements with other transcription factors like SOX2, POU5F1, KDM1A and NCOA3 to trigger ESRRB-dependent gene activation. This mechanism, in the case of SOX2 corecruitment prevents the embryonic stem cells (ESCs) to epiblast stem cells (EpiSC) transition through positive regulation of NR0B1 that inhibits the EpiSC transcriptional program. Also plays a role inner ear development by controlling expression of ion channels and transporters and in early placentation. This Mus musculus (Mouse) protein is Steroid hormone receptor ERR2.